Consider the following 472-residue polypeptide: 3-isopropylmalate dehydratase large subunit (472 aa).

Cys-353, Cys-414, and Cys-417 together coordinate [4Fe-4S] cluster.

It belongs to the aconitase/IPM isomerase family. LeuC type 1 subfamily. In terms of assembly, heterodimer of LeuC and LeuD. Requires [4Fe-4S] cluster as cofactor.

It catalyses the reaction (2R,3S)-3-isopropylmalate = (2S)-2-isopropylmalate. It participates in amino-acid biosynthesis; L-leucine biosynthesis; L-leucine from 3-methyl-2-oxobutanoate: step 2/4. Catalyzes the isomerization between 2-isopropylmalate and 3-isopropylmalate, via the formation of 2-isopropylmaleate. The chain is 3-isopropylmalate dehydratase large subunit from Acinetobacter baumannii (strain AB0057).